Consider the following 271-residue polypeptide: ATP synthase subunit delta (271 aa).

Belongs to the ATPase delta chain family. In terms of assembly, F-type ATPases have 2 components, F(1) - the catalytic core - and F(0) - the membrane proton channel. F(1) has five subunits: alpha(3), beta(3), gamma(1), delta(1), epsilon(1). F(0) has three main subunits: a(1), b(2) and c(10-14). The alpha and beta chains form an alternating ring which encloses part of the gamma chain. F(1) is attached to F(0) by a central stalk formed by the gamma and epsilon chains, while a peripheral stalk is formed by the delta and b chains.

The protein resides in the cell membrane. In terms of biological role, f(1)F(0) ATP synthase produces ATP from ADP in the presence of a proton or sodium gradient. F-type ATPases consist of two structural domains, F(1) containing the extramembraneous catalytic core and F(0) containing the membrane proton channel, linked together by a central stalk and a peripheral stalk. During catalysis, ATP synthesis in the catalytic domain of F(1) is coupled via a rotary mechanism of the central stalk subunits to proton translocation. Its function is as follows. This protein is part of the stalk that links CF(0) to CF(1). It either transmits conformational changes from CF(0) to CF(1) or is implicated in proton conduction. This is ATP synthase subunit delta from Corynebacterium kroppenstedtii (strain DSM 44385 / JCM 11950 / CIP 105744 / CCUG 35717).